A 429-amino-acid polypeptide reads, in one-letter code: Trigger factor (429 aa).

Residues 161–246 (GDRLSIDFKG…INEVALPKEP (86 aa)) enclose the PPIase FKBP-type domain.

It belongs to the FKBP-type PPIase family. Tig subfamily.

It localises to the cytoplasm. The enzyme catalyses [protein]-peptidylproline (omega=180) = [protein]-peptidylproline (omega=0). Involved in protein export. Acts as a chaperone by maintaining the newly synthesized protein in an open conformation. Functions as a peptidyl-prolyl cis-trans isomerase. The chain is Trigger factor from Ruthia magnifica subsp. Calyptogena magnifica.